Consider the following 522-residue polypeptide: Transactivator/viroplasmin protein (522 aa).

Residues 488 to 522 (DASADEGTTDKSGPPPTRSIVEKEDVPNTSSKQVD) are disordered.

Belongs to the caulimoviridae viroplasmin family.

It localises to the host cytoplasm. In terms of biological role, enhances the ribosomal termination-reinitiation event leading to the translation of major open reading frames on the polycistronic viral RNAs. The chain is Transactivator/viroplasmin protein from Cauliflower mosaic virus (strain D/H) (CaMV).